The chain runs to 241 residues: Gamma-interferon-inducible lysosomal thiol reductase-like protein (241 aa).

Residues 1–18 (MLFKSLLLLSVYAVTCYG) form the signal peptide. Asparagine 105 and asparagine 152 each carry an N-linked (GlcNAc...) asparagine glycan. The chain crosses the membrane as a helical span at residues 218–235 (STGSAISSLGMIVTVVAV).

This sequence belongs to the GILT family. As to expression, salivary gland (at protein level). Low-level expression in midgut (at protein level). Expressed in head and leg tissues. Ovary. Fat body. (Microbial infection) Detected with Plasmodium berghei sporozoites isolated from the saliva of infected Anopheles gambiae mosquitoes (at protein level).

It localises to the membrane. Required for normal development of ovary and testis. Its function is as follows. (Microbial infection) Interacts with the surface of Plasmodium berghei sporozoites. Reduces P.berghei sporozoite cell traversal activity and transmission. Limits the motility of P.berghei sporozoites. Decreases the levels of host liver infection by P.berghei sporozoites. Does not affect P.berghei sporozoite viability. Indirectly promotes P.berghei survival in mosquitoes by influencing ovarian development and the subsequent production of 20-hydroxyecdysone and vitellogenin, which, in turn, modulates TEP1-dependent parasite killing. Promotes P.berghei infection in mosquitoes, most likely impacting the oocyst stage of parasite development. Functionally, (Microbial infection) Promotes Plasmodium falciparum survival in mosquitoes. The sequence is that of Gamma-interferon-inducible lysosomal thiol reductase-like protein from Anopheles gambiae (African malaria mosquito).